Consider the following 462-residue polypeptide: uncharacterized protein (462 aa).

6 residues coordinate a divalent metal cation: D12, H14, D48, N81, H179, and H202. A coiled-coil region spans residues 258-291 (ESAETKAFLNEKEREAEEKLSDAVAELAQDAEVK).

The protein belongs to the metallophosphoesterase superfamily. A divalent metal cation serves as cofactor.

This is an uncharacterized protein from Bacillus subtilis (strain 168).